A 437-amino-acid chain; its full sequence is Tol-Pal system protein TolB (437 aa).

The signal sequence occupies residues Met-1–Gly-23.

This sequence belongs to the TolB family. The Tol-Pal system is composed of five core proteins: the inner membrane proteins TolA, TolQ and TolR, the periplasmic protein TolB and the outer membrane protein Pal. They form a network linking the inner and outer membranes and the peptidoglycan layer.

The protein localises to the periplasm. Part of the Tol-Pal system, which plays a role in outer membrane invagination during cell division and is important for maintaining outer membrane integrity. In Coxiella burnetii (strain RSA 493 / Nine Mile phase I), this protein is Tol-Pal system protein TolB.